A 227-amino-acid polypeptide reads, in one-letter code: PKHD-type hydroxylase azo0608 (227 aa).

One can recognise a Fe2OG dioxygenase domain in the interval 78 to 178 (RVLTPFFNRY…RVACFMFMQS (101 aa)). His-97, Asp-99, and His-159 together coordinate Fe cation. Position 169 (Arg-169) interacts with 2-oxoglutarate.

It depends on Fe(2+) as a cofactor. Requires L-ascorbate as cofactor.

The polypeptide is PKHD-type hydroxylase azo0608 (Azoarcus sp. (strain BH72)).